A 259-amino-acid chain; its full sequence is Type III pantothenate kinase (259 aa).

Residue D6 to T13 participates in ATP binding. G107 to R110 lines the substrate pocket. The active-site Proton acceptor is D109. Residue D129 participates in K(+) binding. T132 contacts ATP. T184 contributes to the substrate binding site.

Belongs to the type III pantothenate kinase family. Homodimer. Requires NH4(+) as cofactor. K(+) serves as cofactor.

The protein localises to the cytoplasm. It catalyses the reaction (R)-pantothenate + ATP = (R)-4'-phosphopantothenate + ADP + H(+). Its pathway is cofactor biosynthesis; coenzyme A biosynthesis; CoA from (R)-pantothenate: step 1/5. Functionally, catalyzes the phosphorylation of pantothenate (Pan), the first step in CoA biosynthesis. This Listeria innocua serovar 6a (strain ATCC BAA-680 / CLIP 11262) protein is Type III pantothenate kinase.